A 435-amino-acid polypeptide reads, in one-letter code: Serine--tRNA ligase (435 aa).

Position 242–244 (242–244 (TAE)) interacts with L-serine. Position 273 to 275 (273 to 275 (RSE)) interacts with ATP. E296 lines the L-serine pocket. 360-363 (EISS) lines the ATP pocket. An L-serine-binding site is contributed by S396.

The protein belongs to the class-II aminoacyl-tRNA synthetase family. Type-1 seryl-tRNA synthetase subfamily. In terms of assembly, homodimer. The tRNA molecule binds across the dimer.

It is found in the cytoplasm. The enzyme catalyses tRNA(Ser) + L-serine + ATP = L-seryl-tRNA(Ser) + AMP + diphosphate + H(+). It carries out the reaction tRNA(Sec) + L-serine + ATP = L-seryl-tRNA(Sec) + AMP + diphosphate + H(+). It functions in the pathway aminoacyl-tRNA biosynthesis; selenocysteinyl-tRNA(Sec) biosynthesis; L-seryl-tRNA(Sec) from L-serine and tRNA(Sec): step 1/1. Catalyzes the attachment of serine to tRNA(Ser). Is also able to aminoacylate tRNA(Sec) with serine, to form the misacylated tRNA L-seryl-tRNA(Sec), which will be further converted into selenocysteinyl-tRNA(Sec). This chain is Serine--tRNA ligase, found in Vibrio campbellii (strain ATCC BAA-1116).